An 80-amino-acid polypeptide reads, in one-letter code: UPF0291 protein llmg_1475 (80 aa).

Belongs to the UPF0291 family.

The protein resides in the cytoplasm. This chain is UPF0291 protein llmg_1475, found in Lactococcus lactis subsp. cremoris (strain MG1363).